The primary structure comprises 412 residues: Phosphoglycerate kinase (412 aa).

Substrate-binding positions include D24 to N26, R44, H67 to R70, R126, and R170. ATP-binding positions include K220, G308, E339, and G368 to S371.

It belongs to the phosphoglycerate kinase family. As to quaternary structure, monomer.

It localises to the cytoplasm. The catalysed reaction is (2R)-3-phosphoglycerate + ATP = (2R)-3-phospho-glyceroyl phosphate + ADP. The protein operates within carbohydrate degradation; glycolysis; pyruvate from D-glyceraldehyde 3-phosphate: step 2/5. This is Phosphoglycerate kinase from Mycobacteroides abscessus (strain ATCC 19977 / DSM 44196 / CCUG 20993 / CIP 104536 / JCM 13569 / NCTC 13031 / TMC 1543 / L948) (Mycobacterium abscessus).